We begin with the raw amino-acid sequence, 332 residues long: Protoheme IX farnesyltransferase (332 aa).

The next 7 helical transmembrane spans lie at 63–83 (LICTLGGGALAAAAAGALNCL), 109–129 (TVFLGAVSCTLAAAMLLISGV), 132–152 (LAAGLTLLGLCSYVILYTIIL), 160–180 (IVFGGVAGAIPPLVGASAATG), 188–208 (WLFSLVMLWTPAHFWALAILL), 245–265 (ILGVFALPEGGILYLIMLLPF), and 286–306 (AKGLFRWSILYMFGICLLLLI).

It belongs to the UbiA prenyltransferase family. Protoheme IX farnesyltransferase subfamily.

It localises to the cell inner membrane. The catalysed reaction is heme b + (2E,6E)-farnesyl diphosphate + H2O = Fe(II)-heme o + diphosphate. The protein operates within porphyrin-containing compound metabolism; heme O biosynthesis; heme O from protoheme: step 1/1. Converts heme B (protoheme IX) to heme O by substitution of the vinyl group on carbon 2 of heme B porphyrin ring with a hydroxyethyl farnesyl side group. In Prochlorococcus marinus subsp. pastoris (strain CCMP1986 / NIES-2087 / MED4), this protein is Protoheme IX farnesyltransferase.